We begin with the raw amino-acid sequence, 155 residues long: SsrA-binding protein (155 aa).

The span at 135-147 (TIKRRDQERDIKK) shows a compositional bias: basic and acidic residues. The interval 135 to 155 (TIKRRDQERDIKKQMKHYNAR) is disordered.

It belongs to the SmpB family.

The protein resides in the cytoplasm. In terms of biological role, required for rescue of stalled ribosomes mediated by trans-translation. Binds to transfer-messenger RNA (tmRNA), required for stable association of tmRNA with ribosomes. tmRNA and SmpB together mimic tRNA shape, replacing the anticodon stem-loop with SmpB. tmRNA is encoded by the ssrA gene; the 2 termini fold to resemble tRNA(Ala) and it encodes a 'tag peptide', a short internal open reading frame. During trans-translation Ala-aminoacylated tmRNA acts like a tRNA, entering the A-site of stalled ribosomes, displacing the stalled mRNA. The ribosome then switches to translate the ORF on the tmRNA; the nascent peptide is terminated with the 'tag peptide' encoded by the tmRNA and targeted for degradation. The ribosome is freed to recommence translation, which seems to be the essential function of trans-translation. The protein is SsrA-binding protein of Streptococcus pyogenes serotype M3 (strain SSI-1).